The following is a 1023-amino-acid chain: RTX-I toxin determinant A from serotypes 5/10 (1023 aa).

3 helical membrane passes run Asn-226 to Asn-256, Ser-297 to Phe-326, and Ile-367 to Leu-406. Hemolysin-type calcium-binding repeat units lie at residues Phe-730–Ile-747, Tyr-748–Ile-765, His-766–Leu-783, Ile-784–Leu-801, Leu-812–Phe-829, and Asp-830–Tyr-847.

It belongs to the RTX prokaryotic toxin (TC 1.C.11) family. Post-translationally, palmitoylated by ApxIC. The toxin only becomes active when modified.

It localises to the secreted. The protein localises to the host cell membrane. Its function is as follows. One of the virulence factors of A.pleuropneumoniae, which has a strong hemolytic activity and is cytotoxic for alveolar macrophages and neutrophils. This is RTX-I toxin determinant A from serotypes 5/10 (apxIA) from Actinobacillus pleuropneumoniae (Haemophilus pleuropneumoniae).